The following is a 59-amino-acid chain: Small integral membrane protein 30 (59 aa).

A signal peptide spans 1–24 (MNSVSTQLILVLASLLLILPVVEA). Over 25–29 (VEAGD) the chain is Extracellular. The helical transmembrane segment at 30–50 (AIALLLGVVLSITGICACLGI) threads the bilayer. At 51–59 (YARKRNGQM) the chain is on the cytoplasmic side.

In terms of assembly, interacts (via transmembrane domain) with antiviral protein MAVS (via transmembrane domain); the interaction disrupts MAVS interaction with RIGI and inhibits MAVS aggregation, resulting in the repression of type I interferon signaling and innate immune responses.

Its subcellular location is the endoplasmic reticulum membrane. It localises to the mitochondrion membrane. In terms of biological role, negatively regulates antiviral innate immune responses. Disrupts the interaction of antiviral protein MAVS with innate immune receptor RIGI and inhibits MAVS aggregation, resulting in the repression of type I interferon signaling and innate immune responses. This chain is Small integral membrane protein 30, found in Mus musculus (Mouse).